We begin with the raw amino-acid sequence, 448 residues long: Portal protein (448 aa).

The disordered stretch occupies residues 1-25 (MAKRGRKPKELVPGPGSIDPSDVPK).

This sequence belongs to the P23virus portal protein family. As to quaternary structure, homododecamer. Interacts with the capsid protein. Interacts with the terminase large subunit; this interaction allows the packaging of viral DNA.

It localises to the virion. Its function is as follows. Forms the portal vertex of the capsid. This portal plays critical roles in head assembly, genome packaging, neck/tail attachment, and genome ejection. The portal protein multimerizes as a single ring-shaped homododecamer arranged around a central channel. Forms the portal vertex of the capsid. This portal plays critical roles in head assembly, genome packaging, neck/tail attachment, and genome ejection. This chain is Portal protein, found in Thermus thermophilus (Thermus thermophilus phage P23-45).